The chain runs to 112 residues: Small ribosomal subunit protein uS11c (112 aa).

It belongs to the universal ribosomal protein uS11 family. In terms of assembly, part of the 30S ribosomal subunit.

It is found in the plastid. The polypeptide is Small ribosomal subunit protein uS11c (Euglena longa (Euglenophycean alga)).